Consider the following 363-residue polypeptide: Spermidine/putrescine import ATP-binding protein PotA (363 aa).

Residues 4–234 (LELRNVIRRF…PANRFIADFI (231 aa)) enclose the ABC transporter domain. 36–43 (GPSGCGKT) contacts ATP.

The protein belongs to the ABC transporter superfamily. Spermidine/putrescine importer (TC 3.A.1.11.1) family. As to quaternary structure, the complex is composed of two ATP-binding proteins (PotA), two transmembrane proteins (PotB and PotC) and a solute-binding protein (PotD).

It is found in the cell inner membrane. The enzyme catalyses ATP + H2O + polyamine-[polyamine-binding protein]Side 1 = ADP + phosphate + polyamineSide 2 + [polyamine-binding protein]Side 1.. In terms of biological role, part of the ABC transporter complex PotABCD involved in spermidine/putrescine import. Responsible for energy coupling to the transport system. The protein is Spermidine/putrescine import ATP-binding protein PotA of Nitrosomonas eutropha (strain DSM 101675 / C91 / Nm57).